Consider the following 309-residue polypeptide: Elongation factor Ts (309 aa).

The involved in Mg(2+) ion dislocation from EF-Tu stretch occupies residues 82 to 85; it reads TDFV.

The protein belongs to the EF-Ts family.

The protein resides in the cytoplasm. Functionally, associates with the EF-Tu.GDP complex and induces the exchange of GDP to GTP. It remains bound to the aminoacyl-tRNA.EF-Tu.GTP complex up to the GTP hydrolysis stage on the ribosome. This chain is Elongation factor Ts, found in Rickettsia peacockii (strain Rustic).